The chain runs to 407 residues: Vancomycin aglycone glucosyltransferase (407 aa).

This sequence belongs to the glycosyltransferase 28 family.

It catalyses the reaction vancomycin aglycone + UDP-alpha-D-glucose = devancoaminyl-vancomycin + UDP. It participates in antibiotic biosynthesis; vancomycin biosynthesis. In terms of biological role, glucosyltransferase that transfers glucose to the 4-OH-Phegly(4) residue of vancomycin aglycone (AGV) to produce devancoaminyl-vancomycin (DVV) in the biosynthesis of glycopeptide antibiotic chloroeremomycin, a member of the vancomycin group of antibiotics. This is Vancomycin aglycone glucosyltransferase (gtfB) from Amycolatopsis orientalis (Nocardia orientalis).